We begin with the raw amino-acid sequence, 455 residues long: MKFYTYSGETAAEALKIAQSHHGVDTLVFKTQEIRKKTLTSSGLYEIVVAVEEEENKKAPLIPESLYDEELNEEDVVMQLSSTVEEMRKLAGVSSNQRNYTFSKNKTLLEKDAPLEDTPLEANKQDALLQALKDEANHKKEREKREVKQEEEIKDINAQLSKIRDSLKLIQNMFWDEKNPNSVNIPQEFAEIYKLAKQSGMKSSHLDEIMQLSLELMPLRMRENSVTIKRYFREVLRKIILCRPEDLNLRQKRILMLVGPTGVGKTTTLAKLAARYSRMLAKKYKVGIITLDNYRIGALEQLSWYANKMKMSIEAVIDAKDFAKEIEALEYCDFILVDTTGHSQYDKEKIAGLKEFIDGGYNIDVSLVLSVTTKYEDMKDIYDSFGVLGIDTLIFTKLDESRGLGNLFSLVHESQKPISYLSVGQEVPMDLKVATNEYLVDCMLDGFSNPNKEQA.

GTP contacts are provided by residues 259-266 (GPTGVGKT), 338-342 (DTTGH), and 396-399 (TKLD).

Belongs to the GTP-binding SRP family.

It localises to the cell membrane. Functionally, necessary for flagellar biosynthesis. May be involved in translocation of the flagellum. The chain is Flagellar biosynthesis protein FlhF (flhF) from Helicobacter pylori (strain J99 / ATCC 700824) (Campylobacter pylori J99).